The primary structure comprises 360 residues: Phosphoserine aminotransferase (360 aa).

Arginine 42 provides a ligand contact to L-glutamate. Pyridoxal 5'-phosphate-binding positions include 76–77 (AR), tryptophan 102, threonine 152, aspartate 172, and glutamine 195. Residue lysine 196 is modified to N6-(pyridoxal phosphate)lysine. 237-238 (NT) contacts pyridoxal 5'-phosphate.

The protein belongs to the class-V pyridoxal-phosphate-dependent aminotransferase family. SerC subfamily. In terms of assembly, homodimer. Requires pyridoxal 5'-phosphate as cofactor.

It localises to the cytoplasm. It catalyses the reaction O-phospho-L-serine + 2-oxoglutarate = 3-phosphooxypyruvate + L-glutamate. The enzyme catalyses 4-(phosphooxy)-L-threonine + 2-oxoglutarate = (R)-3-hydroxy-2-oxo-4-phosphooxybutanoate + L-glutamate. Its pathway is amino-acid biosynthesis; L-serine biosynthesis; L-serine from 3-phospho-D-glycerate: step 2/3. It functions in the pathway cofactor biosynthesis; pyridoxine 5'-phosphate biosynthesis; pyridoxine 5'-phosphate from D-erythrose 4-phosphate: step 3/5. In terms of biological role, catalyzes the reversible conversion of 3-phosphohydroxypyruvate to phosphoserine and of 3-hydroxy-2-oxo-4-phosphonooxybutanoate to phosphohydroxythreonine. This chain is Phosphoserine aminotransferase, found in Pasteurella multocida (strain Pm70).